Reading from the N-terminus, the 235-residue chain is Leucyl/phenylalanyl-tRNA--protein transferase (235 aa).

It belongs to the L/F-transferase family.

The protein resides in the cytoplasm. The catalysed reaction is N-terminal L-lysyl-[protein] + L-leucyl-tRNA(Leu) = N-terminal L-leucyl-L-lysyl-[protein] + tRNA(Leu) + H(+). It carries out the reaction N-terminal L-arginyl-[protein] + L-leucyl-tRNA(Leu) = N-terminal L-leucyl-L-arginyl-[protein] + tRNA(Leu) + H(+). The enzyme catalyses L-phenylalanyl-tRNA(Phe) + an N-terminal L-alpha-aminoacyl-[protein] = an N-terminal L-phenylalanyl-L-alpha-aminoacyl-[protein] + tRNA(Phe). Functions in the N-end rule pathway of protein degradation where it conjugates Leu, Phe and, less efficiently, Met from aminoacyl-tRNAs to the N-termini of proteins containing an N-terminal arginine or lysine. This Methylococcus capsulatus (strain ATCC 33009 / NCIMB 11132 / Bath) protein is Leucyl/phenylalanyl-tRNA--protein transferase.